A 357-amino-acid chain; its full sequence is Quinolinate synthase (357 aa).

2 residues coordinate iminosuccinate: His-50 and Ser-71. Cys-116 lines the [4Fe-4S] cluster pocket. Iminosuccinate contacts are provided by residues 142-144 and Ser-159; that span reads YAN. [4Fe-4S] cluster is bound at residue Cys-203. Iminosuccinate is bound by residues 229–231 and Thr-246; that span reads HPE. Cys-300 serves as a coordination point for [4Fe-4S] cluster.

Belongs to the quinolinate synthase family. Type 1 subfamily. Requires [4Fe-4S] cluster as cofactor.

It localises to the cytoplasm. It carries out the reaction iminosuccinate + dihydroxyacetone phosphate = quinolinate + phosphate + 2 H2O + H(+). Its pathway is cofactor biosynthesis; NAD(+) biosynthesis; quinolinate from iminoaspartate: step 1/1. Catalyzes the condensation of iminoaspartate with dihydroxyacetone phosphate to form quinolinate. The chain is Quinolinate synthase from Shewanella oneidensis (strain ATCC 700550 / JCM 31522 / CIP 106686 / LMG 19005 / NCIMB 14063 / MR-1).